The sequence spans 344 residues: MSAIVNHLPSEHPKVNFGKVGVLLVNLGTPDGTDYTSMRRYLREFLSDKRVIEWSRLFWYPILYGIVLNTRPGKVGKAYAEIWNNDLNESYLRTYTRNQAEKMAVSLTDMPNVVVDWAMRYGQPSIKSRMDALQKAGCEKILLFPLYPQYAAATTATVNDEAFKALLKMRWQPALRTVPQYSDDPVYIDALANSIEAHLASLDWEPELVLTSFHGIPKSYFMKGDPYHCQCYKTGRLLRERLGWPKEKLMVTFQSRFGPEEWLQPYTDKTVEKLAKDGVKRIAVINPGFVSDCLETLEEIAGEAGEIFHHAGGEKFSHIPCLNDSPDGMRVLENVVRRELQGWV.

Fe cation-binding residues include histidine 214 and glutamate 295.

The protein belongs to the ferrochelatase family.

It localises to the cytoplasm. The enzyme catalyses heme b + 2 H(+) = protoporphyrin IX + Fe(2+). The protein operates within porphyrin-containing compound metabolism; protoheme biosynthesis; protoheme from protoporphyrin-IX: step 1/1. In terms of biological role, catalyzes the ferrous insertion into protoporphyrin IX. This is Ferrochelatase from Allorhizobium ampelinum (strain ATCC BAA-846 / DSM 112012 / S4) (Agrobacterium vitis (strain S4)).